We begin with the raw amino-acid sequence, 241 residues long: Small ribosomal subunit protein uS2 (241 aa).

The protein belongs to the universal ribosomal protein uS2 family.

The protein is Small ribosomal subunit protein uS2 of Pectobacterium carotovorum subsp. carotovorum (strain PC1).